The following is a 265-amino-acid chain: MSRIQKTFAALAAQQKKGLIPFITAGDPEPGLTVALMHALVAGGADVIELGVPFSDPMADGPVIQRASERALAQGVSLTQVLQWVREFRQTNTDTPVVLMGYANPIERMGEAAFAAAASAAGVDGVLVVDYPPEECESFAGLMRDHGMDPIFLLAPTSTDARIEAVAKVASGYLYYVSLKGVTGSASIDLDSVAARLPLIKQHANLPVGVGFGIRDAQTARAIGSVADAVVIGSRLVQLLEDTPREQAVTALQSFIAEIRQALDA.

Residues glutamate 49 and aspartate 60 each act as proton acceptor in the active site.

It belongs to the TrpA family. As to quaternary structure, tetramer of two alpha and two beta chains.

The enzyme catalyses (1S,2R)-1-C-(indol-3-yl)glycerol 3-phosphate + L-serine = D-glyceraldehyde 3-phosphate + L-tryptophan + H2O. It participates in amino-acid biosynthesis; L-tryptophan biosynthesis; L-tryptophan from chorismate: step 5/5. The alpha subunit is responsible for the aldol cleavage of indoleglycerol phosphate to indole and glyceraldehyde 3-phosphate. This is Tryptophan synthase alpha chain from Cupriavidus taiwanensis (strain DSM 17343 / BCRC 17206 / CCUG 44338 / CIP 107171 / LMG 19424 / R1) (Ralstonia taiwanensis (strain LMG 19424)).